The sequence spans 547 residues: uncharacterized protein (547 aa).

A compositionally biased stretch (polar residues) spans M1–S18. Disordered stretches follow at residues M1–P41 and P80–Q165. Low complexity-rich tracts occupy residues Q19–Q29 and P83–Y94. A compositionally biased stretch (pro residues) spans V121–P135. A compositionally biased stretch (polar residues) spans K136–G160. Residues C174 to C201 constitute a DNA-binding region (zn(2)-C6 fungal-type).

Its subcellular location is the nucleus. This is an uncharacterized protein from Schizosaccharomyces pombe (strain 972 / ATCC 24843) (Fission yeast).